A 485-amino-acid chain; its full sequence is Aspartyl/glutamyl-tRNA(Asn/Gln) amidotransferase subunit B (485 aa).

Belongs to the GatB/GatE family. GatB subfamily. Heterotrimer of A, B and C subunits.

The enzyme catalyses L-glutamyl-tRNA(Gln) + L-glutamine + ATP + H2O = L-glutaminyl-tRNA(Gln) + L-glutamate + ADP + phosphate + H(+). The catalysed reaction is L-aspartyl-tRNA(Asn) + L-glutamine + ATP + H2O = L-asparaginyl-tRNA(Asn) + L-glutamate + ADP + phosphate + 2 H(+). Allows the formation of correctly charged Asn-tRNA(Asn) or Gln-tRNA(Gln) through the transamidation of misacylated Asp-tRNA(Asn) or Glu-tRNA(Gln) in organisms which lack either or both of asparaginyl-tRNA or glutaminyl-tRNA synthetases. The reaction takes place in the presence of glutamine and ATP through an activated phospho-Asp-tRNA(Asn) or phospho-Glu-tRNA(Gln). The protein is Aspartyl/glutamyl-tRNA(Asn/Gln) amidotransferase subunit B of Cupriavidus taiwanensis (strain DSM 17343 / BCRC 17206 / CCUG 44338 / CIP 107171 / LMG 19424 / R1) (Ralstonia taiwanensis (strain LMG 19424)).